A 209-amino-acid polypeptide reads, in one-letter code: Large ribosomal subunit protein uL3 (209 aa).

The protein belongs to the universal ribosomal protein uL3 family. As to quaternary structure, part of the 50S ribosomal subunit. Forms a cluster with proteins L14 and L19.

One of the primary rRNA binding proteins, it binds directly near the 3'-end of the 23S rRNA, where it nucleates assembly of the 50S subunit. The sequence is that of Large ribosomal subunit protein uL3 from Nitratidesulfovibrio vulgaris (strain DSM 19637 / Miyazaki F) (Desulfovibrio vulgaris).